The chain runs to 321 residues: Glucan 1,3-beta-glucosidase (321 aa).

The first 21 residues, 1–21 (MQFLSSFVFAALALLPLSAMA), serve as a signal peptide directing secretion. 2 N-linked (GlcNAc...) asparagine glycosylation sites follow: N39 and N99. Residue E141 is the Proton donor of the active site. N-linked (GlcNAc...) asparagine glycosylation is found at N210, N213, and N237. The active-site Nucleophile is E244. N309 and N317 each carry an N-linked (GlcNAc...) asparagine glycan.

This sequence belongs to the glycosyl hydrolase 17 family.

It is found in the secreted. The protein localises to the cell wall. It catalyses the reaction Successive hydrolysis of beta-D-glucose units from the non-reducing ends of (1-&gt;3)-beta-D-glucans, releasing alpha-glucose.. Its function is as follows. Glucanases possibly play a role in cell expansion during growth, in cell-cell fusion during mating, and in spore release during sporulation. This enzyme may be involved in beta-glucan degradation and also function biosynthetically as a transglycosylase. The sequence is that of Glucan 1,3-beta-glucosidase (bgl2) from Schizosaccharomyces pombe (strain 972 / ATCC 24843) (Fission yeast).